The following is a 271-amino-acid chain: 4-hydroxy-tetrahydrodipicolinate reductase (271 aa).

NAD(+)-binding positions include 11 to 16 (GGSGRM) and Glu-37. An NADP(+)-binding site is contributed by Arg-38. NAD(+) is bound by residues 101–103 (GTT) and 125–128 (APNM). The active-site Proton donor/acceptor is His-158. A (S)-2,3,4,5-tetrahydrodipicolinate-binding site is contributed by His-159. Catalysis depends on Lys-162, which acts as the Proton donor. 168–169 (GT) contributes to the (S)-2,3,4,5-tetrahydrodipicolinate binding site.

Belongs to the DapB family.

It is found in the cytoplasm. It carries out the reaction (S)-2,3,4,5-tetrahydrodipicolinate + NAD(+) + H2O = (2S,4S)-4-hydroxy-2,3,4,5-tetrahydrodipicolinate + NADH + H(+). The enzyme catalyses (S)-2,3,4,5-tetrahydrodipicolinate + NADP(+) + H2O = (2S,4S)-4-hydroxy-2,3,4,5-tetrahydrodipicolinate + NADPH + H(+). The protein operates within amino-acid biosynthesis; L-lysine biosynthesis via DAP pathway; (S)-tetrahydrodipicolinate from L-aspartate: step 4/4. In terms of biological role, catalyzes the conversion of 4-hydroxy-tetrahydrodipicolinate (HTPA) to tetrahydrodipicolinate. This Shewanella halifaxensis (strain HAW-EB4) protein is 4-hydroxy-tetrahydrodipicolinate reductase.